A 53-amino-acid chain; its full sequence is Large ribosomal subunit protein eL40 (53 aa).

This sequence belongs to the eukaryotic ribosomal protein eL40 family.

This chain is Large ribosomal subunit protein eL40, found in Pyrobaculum aerophilum (strain ATCC 51768 / DSM 7523 / JCM 9630 / CIP 104966 / NBRC 100827 / IM2).